The chain runs to 354 residues: Rhodopsin (354 aa).

Over 1–36 the chain is Extracellular; it reads MNGTEGPAFYVPMSNATGVVRSPYEYPQYYLVAPWA. N-linked (GlcNAc...) asparagine glycans are attached at residues asparagine 2 and asparagine 15. A helical transmembrane segment spans residues 37–61; sequence YGLLAAYMFFLIITGFPVNFLTLYV. Topologically, residues 62–73 are cytoplasmic; the sequence is TIEHKKLRTPLN. Residues 74–96 form a helical membrane-spanning segment; sequence YILLNLAIADLFMVFGGFTTTMY. Over 97-110 the chain is Extracellular; sequence TSLHGYFVFGRLGC. Cysteines 110 and 187 form a disulfide. A helical transmembrane segment spans residues 111 to 133; sequence NLEGFFATLGGEMGLWSLVVLAI. The 'Ionic lock' involved in activated form stabilization signature appears at 134-136; it reads ERW. The Cytoplasmic segment spans residues 134 to 152; the sequence is ERWMVVCKPVSNFRFGENH. The helical transmembrane segment at 153 to 173 threads the bilayer; it reads AIMGVAFTWVMACSCAVPPLV. Over 174 to 202 the chain is Extracellular; the sequence is GWSRYIPEGMQCSCGVDYYTRTPGVNNES. Asparagine 200 is a glycosylation site (N-linked (GlcNAc...) asparagine). The helical transmembrane segment at 203 to 224 threads the bilayer; it reads FVIYMFIVHFFIPLIVIFFCYG. The Cytoplasmic segment spans residues 225 to 252; that stretch reads RLVCTVKEAAAQQQESETTQRAEREVTR. The helical transmembrane segment at 253 to 274 threads the bilayer; sequence MVIIMVIAFLICWLPYAGVAWY. The Extracellular portion of the chain corresponds to 275–286; the sequence is IFTHQGSEFGPV. The chain crosses the membrane as a helical span at residues 287–308; that stretch reads FMTLPAFFAKTSAVYNPCIYIC. Residue lysine 296 is modified to N6-(retinylidene)lysine. The Cytoplasmic segment spans residues 309–354; it reads MNKQFRHCMITTLCCGKNPFEEEEGASTTASKTEASSVSSSSVSPA. A disordered region spans residues 333–354; the sequence is GASTTASKTEASSVSSSSVSPA. Residues 334–354 show a composition bias toward low complexity; the sequence is ASTTASKTEASSVSSSSVSPA.

The protein belongs to the G-protein coupled receptor 1 family. Opsin subfamily. In terms of processing, phosphorylated on some or all of the serine and threonine residues present in the C-terminal region. Contains one covalently linked retinal chromophore. Retinal rod photoreceptor cells, predominantly in the outer segments (at protein level). Retinal rod photoreceptor cells.

The protein localises to the membrane. It is found in the cell projection. Its subcellular location is the cilium. It localises to the photoreceptor outer segment. Its function is as follows. Photoreceptor required for image-forming vision at low light intensity. While most salt water fish species use retinal as chromophore, most freshwater fish use 3-dehydroretinal, or a mixture of retinal and 3-dehydroretinal. Light-induced isomerization of 11-cis to all-trans retinal triggers a conformational change that activates signaling via G-proteins. Subsequent receptor phosphorylation mediates displacement of the bound G-protein alpha subunit by arrestin and terminates signaling. The sequence is that of Rhodopsin (rho) from Danio rerio (Zebrafish).